The chain runs to 133 residues: Exosome complex protein C1739.07 (133 aa).

The disordered stretch occupies residues 96–133 (VNPKTEAVNTSNAAISSSSSNRPKVAKDAATRIIKHHT). Positions 102-116 (AVNTSNAAISSSSSN) are enriched in low complexity.

It belongs to the C1D family. Component of the exosome multienzyme ribonuclease complex. Interacts with cut3.

It localises to the cytoplasm. The protein resides in the nucleus. Required for exosome-dependent processing of pre-rRNA and small nucleolar RNA (snRNA) precursors. Involved in processing of 35S pre-rRNA at the A0, A1 and A2 sites. This is Exosome complex protein C1739.07 from Schizosaccharomyces pombe (strain 972 / ATCC 24843) (Fission yeast).